A 174-amino-acid polypeptide reads, in one-letter code: NADH-ubiquinone oxidoreductase chain 6 (174 aa).

Transmembrane regions (helical) follow at residues 1 to 21 (MTYTLLLLSVILVVGFVGFSS), 24 to 44 (SPIYGGLVLVVSGVVGCAVIL), 47 to 67 (GGGYLGLMVFLIYLGGMMVVF), 86 to 106 (VEVLVGVLVGFVMEVALVLWA), and 151 to 171 (WLVVVTGWTLLVGVYIVIEIA).

This sequence belongs to the complex I subunit 6 family. As to quaternary structure, core subunit of respiratory chain NADH dehydrogenase (Complex I) which is composed of 45 different subunits.

It is found in the mitochondrion inner membrane. It catalyses the reaction a ubiquinone + NADH + 5 H(+)(in) = a ubiquinol + NAD(+) + 4 H(+)(out). Functionally, core subunit of the mitochondrial membrane respiratory chain NADH dehydrogenase (Complex I) which catalyzes electron transfer from NADH through the respiratory chain, using ubiquinone as an electron acceptor. Essential for the catalytic activity and assembly of complex I. The chain is NADH-ubiquinone oxidoreductase chain 6 (MT-ND6) from Hylobates lar (Lar gibbon).